The primary structure comprises 303 residues: Protoheme IX farnesyltransferase (303 aa).

Helical transmembrane passes span 25–45, 54–74, 104–124, 125–145, 151–171, 179–199, 227–247, 248–268, and 280–300; these read MGLV…AVVM, IPQI…ACAL, LLLL…LLNI, PSGV…SIWS, WNTV…WVAI, AIAL…ALAI, FIWL…GVVF, VVLA…TFKK, and FIYS…VSLL.

Belongs to the UbiA prenyltransferase family. Protoheme IX farnesyltransferase subfamily. As to quaternary structure, interacts with CtaA.

Its subcellular location is the cell membrane. The catalysed reaction is heme b + (2E,6E)-farnesyl diphosphate + H2O = Fe(II)-heme o + diphosphate. It functions in the pathway porphyrin-containing compound metabolism; heme O biosynthesis; heme O from protoheme: step 1/1. Its function is as follows. Converts heme B (protoheme IX) to heme O by substitution of the vinyl group on carbon 2 of heme B porphyrin ring with a hydroxyethyl farnesyl side group. The polypeptide is Protoheme IX farnesyltransferase (Staphylococcus aureus (strain bovine RF122 / ET3-1)).